A 439-amino-acid polypeptide reads, in one-letter code: Cell division protein DivIB (439 aa).

Disordered stretches follow at residues 1-96 and 119-149; these read MDDK…DSNI and DNEQPQSAPKEQNSDSIDEETVTKKERKSKV. The Cytoplasmic portion of the chain corresponds to 1–173; sequence MDDKTKNDQQ…RRKRQKRIQY (173 aa). Residues 11–20 show a composition bias toward acidic residues; it reads ESNEDKDELE. Residues 26–38 are compositionally biased toward basic residues; that stretch reads TSKKRRQRKRSKA. The span at 64–76 shows a compositional bias: basic and acidic residues; the sequence is KDFKKEESNDKNN. Residues 77 to 86 show a composition bias toward low complexity; sequence DSASSHANDN. Residues 87–96 are compositionally biased toward acidic residues; that stretch reads NIDDSTDSNI. Over residues 119-133 the composition is skewed to polar residues; it reads DNEQPQSAPKEQNSD. The helical transmembrane segment at 174–194 threads the bilayer; it reads SVITILVLLIAVILIYMFSPL. One can recognise a POTRA domain in the interval 195–263; sequence SKIAHVNING…NTLNVDITEN (69 aa). At 195 to 439 the chain is on the extracellular side; that stretch reads SKIAHVNING…KINKQSSKNN (245 aa). The segment at 396 to 439 is disordered; it reads YRGNTSSQSESDKNVTKSSQEENQAKEELQSVLNKINKQSSKNN. The segment covering 405-424 has biased composition (basic and acidic residues); the sequence is ESDKNVTKSSQEENQAKEEL. Residues 426–439 show a composition bias toward polar residues; that stretch reads SVLNKINKQSSKNN.

Belongs to the FtsQ/DivIB family. DivIB subfamily.

Its subcellular location is the cell membrane. In terms of biological role, cell division protein that may be involved in stabilizing or promoting the assembly of the division complex. The sequence is that of Cell division protein DivIB from Staphylococcus aureus (strain NCTC 8325 / PS 47).